A 119-amino-acid polypeptide reads, in one-letter code: Large ribosomal subunit protein bL19 (119 aa).

It belongs to the bacterial ribosomal protein bL19 family.

Functionally, this protein is located at the 30S-50S ribosomal subunit interface and may play a role in the structure and function of the aminoacyl-tRNA binding site. The polypeptide is Large ribosomal subunit protein bL19 (Leuconostoc citreum (strain KM20)).